We begin with the raw amino-acid sequence, 365 residues long: Anhydro-N-acetylmuramic acid kinase (365 aa).

9–16 (GTSLDGVD) is an ATP binding site.

It belongs to the anhydro-N-acetylmuramic acid kinase family.

The enzyme catalyses 1,6-anhydro-N-acetyl-beta-muramate + ATP + H2O = N-acetyl-D-muramate 6-phosphate + ADP + H(+). It functions in the pathway amino-sugar metabolism; 1,6-anhydro-N-acetylmuramate degradation. Its pathway is cell wall biogenesis; peptidoglycan recycling. Catalyzes the specific phosphorylation of 1,6-anhydro-N-acetylmuramic acid (anhMurNAc) with the simultaneous cleavage of the 1,6-anhydro ring, generating MurNAc-6-P. Is required for the utilization of anhMurNAc either imported from the medium or derived from its own cell wall murein, and thus plays a role in cell wall recycling. In Zymomonas mobilis subsp. mobilis (strain ATCC 31821 / ZM4 / CP4), this protein is Anhydro-N-acetylmuramic acid kinase.